We begin with the raw amino-acid sequence, 95 residues long: Aspartyl/glutamyl-tRNA(Asn/Gln) amidotransferase subunit C (95 aa).

A disordered region spans residues 51–95 (PTSHATLTSSRLREDVTRPSLPPEKSLANAPAKSDTSFAVPKIIE).

Belongs to the GatC family. As to quaternary structure, heterotrimer of A, B and C subunits.

The enzyme catalyses L-glutamyl-tRNA(Gln) + L-glutamine + ATP + H2O = L-glutaminyl-tRNA(Gln) + L-glutamate + ADP + phosphate + H(+). It catalyses the reaction L-aspartyl-tRNA(Asn) + L-glutamine + ATP + H2O = L-asparaginyl-tRNA(Asn) + L-glutamate + ADP + phosphate + 2 H(+). Functionally, allows the formation of correctly charged Asn-tRNA(Asn) or Gln-tRNA(Gln) through the transamidation of misacylated Asp-tRNA(Asn) or Glu-tRNA(Gln) in organisms which lack either or both of asparaginyl-tRNA or glutaminyl-tRNA synthetases. The reaction takes place in the presence of glutamine and ATP through an activated phospho-Asp-tRNA(Asn) or phospho-Glu-tRNA(Gln). This Myxococcus xanthus (strain DK1622) protein is Aspartyl/glutamyl-tRNA(Asn/Gln) amidotransferase subunit C.